Reading from the N-terminus, the 202-residue chain is N-(5'-phosphoribosyl)anthranilate isomerase (202 aa).

Belongs to the TrpF family.

The enzyme catalyses N-(5-phospho-beta-D-ribosyl)anthranilate = 1-(2-carboxyphenylamino)-1-deoxy-D-ribulose 5-phosphate. It participates in amino-acid biosynthesis; L-tryptophan biosynthesis; L-tryptophan from chorismate: step 3/5. The polypeptide is N-(5'-phosphoribosyl)anthranilate isomerase (Listeria monocytogenes serotype 4b (strain CLIP80459)).